Reading from the N-terminus, the 160-residue chain is Sec-independent protein translocase protein TatB (160 aa).

The chain crosses the membrane as a helical span at residues 1-21; that stretch reads MFGMGFFEILVVLVVAIIFLG. Residues 118 to 160 are disordered; it reads HLNEEVSNEEALNKEVSSDESPKEVQLATDNNTKEHDKEKEHV. Basic and acidic residues-rich tracts occupy residues 128–140 and 149–160; these read ALNK…ESPK and NTKEHDKEKEHV.

Belongs to the TatB family. The Tat system comprises two distinct complexes: a TatABC complex, containing multiple copies of TatA, TatB and TatC subunits, and a separate TatA complex, containing only TatA subunits. Substrates initially bind to the TatABC complex, which probably triggers association of the separate TatA complex to form the active translocon.

The protein localises to the cell inner membrane. In terms of biological role, part of the twin-arginine translocation (Tat) system that transports large folded proteins containing a characteristic twin-arginine motif in their signal peptide across membranes. Together with TatC, TatB is part of a receptor directly interacting with Tat signal peptides. TatB may form an oligomeric binding site that transiently accommodates folded Tat precursor proteins before their translocation. This chain is Sec-independent protein translocase protein TatB, found in Helicobacter pylori (strain HPAG1).